A 322-amino-acid polypeptide reads, in one-letter code: Phosphatidylserine decarboxylase proenzyme (322 aa).

Active-site charge relay system; for autoendoproteolytic cleavage activity residues include Asp-90, His-147, and Ser-254. Residue Ser-254 is the Schiff-base intermediate with substrate; via pyruvic acid; for decarboxylase activity of the active site. Position 254 is a pyruvic acid (Ser); by autocatalysis (Ser-254). The interval 295–322 is disordered; the sequence is VEPAPLPTEEIKAEHDASPLVDNKKDDT. Basic and acidic residues predominate over residues 303–322; the sequence is EEIKAEHDASPLVDNKKDDT.

This sequence belongs to the phosphatidylserine decarboxylase family. PSD-B subfamily. Prokaryotic type I sub-subfamily. In terms of assembly, heterodimer of a large membrane-associated beta subunit and a small pyruvoyl-containing alpha subunit. Pyruvate serves as cofactor. In terms of processing, is synthesized initially as an inactive proenzyme. Formation of the active enzyme involves a self-maturation process in which the active site pyruvoyl group is generated from an internal serine residue via an autocatalytic post-translational modification. Two non-identical subunits are generated from the proenzyme in this reaction, and the pyruvate is formed at the N-terminus of the alpha chain, which is derived from the carboxyl end of the proenzyme. The autoendoproteolytic cleavage occurs by a canonical serine protease mechanism, in which the side chain hydroxyl group of the serine supplies its oxygen atom to form the C-terminus of the beta chain, while the remainder of the serine residue undergoes an oxidative deamination to produce ammonia and the pyruvoyl prosthetic group on the alpha chain. During this reaction, the Ser that is part of the protease active site of the proenzyme becomes the pyruvoyl prosthetic group, which constitutes an essential element of the active site of the mature decarboxylase.

It is found in the cell membrane. The enzyme catalyses a 1,2-diacyl-sn-glycero-3-phospho-L-serine + H(+) = a 1,2-diacyl-sn-glycero-3-phosphoethanolamine + CO2. It functions in the pathway phospholipid metabolism; phosphatidylethanolamine biosynthesis; phosphatidylethanolamine from CDP-diacylglycerol: step 2/2. Functionally, catalyzes the formation of phosphatidylethanolamine (PtdEtn) from phosphatidylserine (PtdSer). The sequence is that of Phosphatidylserine decarboxylase proenzyme from Salmonella agona (strain SL483).